The chain runs to 259 residues: GTP cyclohydrolase FolE2 (259 aa).

It belongs to the GTP cyclohydrolase IV family.

It catalyses the reaction GTP + H2O = 7,8-dihydroneopterin 3'-triphosphate + formate + H(+). It participates in cofactor biosynthesis; 7,8-dihydroneopterin triphosphate biosynthesis; 7,8-dihydroneopterin triphosphate from GTP: step 1/1. In terms of biological role, converts GTP to 7,8-dihydroneopterin triphosphate. This chain is GTP cyclohydrolase FolE2, found in Thermotoga petrophila (strain ATCC BAA-488 / DSM 13995 / JCM 10881 / RKU-1).